We begin with the raw amino-acid sequence, 453 residues long: Kynureninase (453 aa).

Pyridoxal 5'-phosphate contacts are provided by residues Leu-111, Thr-112, 139–142 (FPSD), Ser-196, Asp-226, His-229, and Tyr-251. Residue Lys-252 is modified to N6-(pyridoxal phosphate)lysine. Residues Trp-286 and Asn-314 each contribute to the pyridoxal 5'-phosphate site.

This sequence belongs to the kynureninase family. In terms of assembly, homodimer. The cofactor is pyridoxal 5'-phosphate.

Its subcellular location is the cytoplasm. It localises to the nucleus. It carries out the reaction L-kynurenine + H2O = anthranilate + L-alanine + H(+). The enzyme catalyses 3-hydroxy-L-kynurenine + H2O = 3-hydroxyanthranilate + L-alanine + H(+). The protein operates within amino-acid degradation; L-kynurenine degradation; L-alanine and anthranilate from L-kynurenine: step 1/1. Its pathway is cofactor biosynthesis; NAD(+) biosynthesis; quinolinate from L-kynurenine: step 2/3. Its function is as follows. Catalyzes the cleavage of L-kynurenine (L-Kyn) and L-3-hydroxykynurenine (L-3OHKyn) into anthranilic acid (AA) and 3-hydroxyanthranilic acid (3-OHAA), respectively. This Saccharomyces cerevisiae (strain ATCC 204508 / S288c) (Baker's yeast) protein is Kynureninase.